Reading from the N-terminus, the 134-residue chain is UPF0299 membrane protein KPK_1586 (134 aa).

The next 4 helical transmembrane spans lie at 5–25 (LTII…LYAG), 26–46 (IFIA…MLIL), 66–86 (ILIR…MQYW), and 93–113 (LGPV…VVSW).

It belongs to the UPF0299 family.

It is found in the cell inner membrane. The protein is UPF0299 membrane protein KPK_1586 of Klebsiella pneumoniae (strain 342).